We begin with the raw amino-acid sequence, 117 residues long: Acidic phospholipase A2 (117 aa).

7 disulfides stabilise this stretch: Cys11–Cys70, Cys25–Cys116, Cys27–Cys43, Cys42–Cys98, Cys49–Cys91, Cys59–Cys84, and Cys77–Cys89. Ca(2+) contacts are provided by Tyr26, Gly28, and Gly30. His46 is a catalytic residue. Asp47 serves as a coordination point for Ca(2+). N-linked (GlcNAc...) asparagine glycosylation occurs at Asn80. The active site involves Asp92.

Ca(2+) is required as a cofactor. Expressed by the venom gland.

It is found in the secreted. It carries out the reaction a 1,2-diacyl-sn-glycero-3-phosphocholine + H2O = a 1-acyl-sn-glycero-3-phosphocholine + a fatty acid + H(+). Snake venom phospholipase A2 (PLA2) that shows strong myotoxicity and induces edema in mice. Shows no cytotoxicity in vitro. Has a strong anticoagulant effect in vitro. PLA2 catalyzes the calcium-dependent hydrolysis of the 2-acyl groups in 3-sn-phosphoglycerides. The polypeptide is Acidic phospholipase A2 (Micrurus dumerilii (Coral snake)).